Here is a 47-residue protein sequence, read N- to C-terminus: Ruminococcin-A (47 aa).

An N-terminal signal peptide occupies residues 1–23 (MRNDVLTLTNPMEEKELEQILGG). 2,3-didehydrobutyrine occurs at positions 30 and 39. The beta-methyllanthionine (Thr-Cys) cross-link spans 30 to 35 (TISHEC). A cross-link (lanthionine (Ser-Cys)) is located at residues 32–46 (SHECNMNTWQFLFTC). Residues 45–47 (TCC) constitute a cross-link (beta-methyllanthionine (Thr-Cys)).

Post-translationally, maturation of lantibiotics involves the enzymatic conversion of Thr, and Ser into dehydrated AA and the formation of thioether bonds with cysteine. This is followed by membrane translocation and cleavage of the modified precursor. In terms of processing, it is not established whether the 2,3-didehydrobutyrine is the E- or Z-isomer.

Its subcellular location is the secreted. Functionally, lanthionine-containing peptide antibiotic (lantibiotic) active on Gram-positive bacteria. The bactericidal activity of lantibiotics is based on depolarization of energized bacterial cytoplasmic membranes, initiated by the formation of aqueous transmembrane pores. Ruminococcin A is a broad spectrum bacteriocin exhibiting activity against a wide range of pathogenic clostridia and B.longum. The sequence is that of Ruminococcin-A (rumA1) from Mediterraneibacter gnavus (Ruminococcus gnavus).